The chain runs to 240 residues: MELTWFGHSTWRVTVGTTDLLVDPFFDNPHTDTAPSEVAVDHVLLTHGHADHIAHVGAFADTHTVGTPEVTGYVADETGVEDTTGMNLGGTVELGDAFVTMVRADHTNGLETGYEYSGGTPVGYVISDAAPTQTGDGDATTFYHAGDTSLQSEMKDVIGPYLDPDAAAVPVGDHFTMGPMQAAVAVDWLDVDVAFPMHYDTFPPIEVDTADFEREVNATGSQADVHVLDGDETVDLSDAL.

It belongs to the UPF0173 family.

The chain is UPF0173 metal-dependent hydrolase OE_2513F from Halobacterium salinarum (strain ATCC 29341 / DSM 671 / R1).